A 291-amino-acid chain; its full sequence is MERLFKHICLVARHSKPGITPALMQLANHLAAGGATVLIDKESVTPDEANGYPLIDRTDMGKLADLCIVLGGDGTMLSIARLLAPYRVPLVGINQGRLGFMTDIPLHEMLDSVDAILHGKFVPEDRILLQAAVVREDAEVASALAFNDVVFSRGAVGSMIEFEVFIDNQFVYSQRSDGLIVSTPTGSTAYSLASGGPILHPTLQAIALVPICPQSLSNRPIAVNDSCEVEFMLTRGLDARVHFDGQLHCDLMEMDRVLIRRYRNPLRILHPEGYNYYDMLRHKLHWGERLI.

Catalysis depends on aspartate 73, which acts as the Proton acceptor. NAD(+)-binding positions include 73-74 (DG), 147-148 (ND), arginine 175, aspartate 177, and glutamine 246.

It belongs to the NAD kinase family. A divalent metal cation is required as a cofactor.

The protein localises to the cytoplasm. It carries out the reaction NAD(+) + ATP = ADP + NADP(+) + H(+). Functionally, involved in the regulation of the intracellular balance of NAD and NADP, and is a key enzyme in the biosynthesis of NADP. Catalyzes specifically the phosphorylation on 2'-hydroxyl of the adenosine moiety of NAD to yield NADP. The polypeptide is NAD kinase (Chromobacterium violaceum (strain ATCC 12472 / DSM 30191 / JCM 1249 / CCUG 213 / NBRC 12614 / NCIMB 9131 / NCTC 9757 / MK)).